The following is a 411-amino-acid chain: Multifunctional CCA protein (411 aa).

ATP-binding residues include Gly8 and Arg11. Residues Gly8 and Arg11 each contribute to the CTP site. Mg(2+) contacts are provided by Asp21 and Asp23. Positions 91, 137, and 140 each coordinate ATP. Residues Arg91, Arg137, and Arg140 each contribute to the CTP site. Positions 228-333 constitute an HD domain; sequence SGVHTLLVIE…LKVFNALDIW (106 aa).

Belongs to the tRNA nucleotidyltransferase/poly(A) polymerase family. Bacterial CCA-adding enzyme type 1 subfamily. In terms of assembly, monomer. Can also form homodimers and oligomers. The cofactor is Mg(2+). Requires Ni(2+) as cofactor.

It catalyses the reaction a tRNA precursor + 2 CTP + ATP = a tRNA with a 3' CCA end + 3 diphosphate. The catalysed reaction is a tRNA with a 3' CCA end + 2 CTP + ATP = a tRNA with a 3' CCACCA end + 3 diphosphate. Its function is as follows. Catalyzes the addition and repair of the essential 3'-terminal CCA sequence in tRNAs without using a nucleic acid template. Adds these three nucleotides in the order of C, C, and A to the tRNA nucleotide-73, using CTP and ATP as substrates and producing inorganic pyrophosphate. tRNA 3'-terminal CCA addition is required both for tRNA processing and repair. Also involved in tRNA surveillance by mediating tandem CCA addition to generate a CCACCA at the 3' terminus of unstable tRNAs. While stable tRNAs receive only 3'-terminal CCA, unstable tRNAs are marked with CCACCA and rapidly degraded. This Actinobacillus pleuropneumoniae serotype 5b (strain L20) protein is Multifunctional CCA protein.